We begin with the raw amino-acid sequence, 622 residues long: Cilia- and flagella-associated protein 206 (622 aa).

This sequence belongs to the CFAP206 family.

It is found in the cytoplasm. Its subcellular location is the cytoskeleton. The protein resides in the cilium axoneme. It localises to the cilium basal body. In terms of biological role, essential for sperm motility and is involved in the regulation of the beating frequency of motile cilia on the epithelial cells of the respiratory tract. Required for the establishment of radial spokes in sperm flagella. This chain is Cilia- and flagella-associated protein 206, found in Rattus norvegicus (Rat).